The following is a 208-amino-acid chain: Imidazoleglycerol-phosphate dehydratase (208 aa).

This sequence belongs to the imidazoleglycerol-phosphate dehydratase family.

The enzyme catalyses D-erythro-1-(imidazol-4-yl)glycerol 3-phosphate = 3-(imidazol-4-yl)-2-oxopropyl phosphate + H2O. Its pathway is amino-acid biosynthesis; L-histidine biosynthesis; L-histidine from 5-phospho-alpha-D-ribose 1-diphosphate: step 6/9. In Trichoderma harzianum (Hypocrea lixii), this protein is Imidazoleglycerol-phosphate dehydratase (his3).